A 368-amino-acid chain; its full sequence is CST complex subunit STN1 (368 aa).

The segment at 2 to 192 (AVSLGDDDAD…KCYDQPFKMP (191 aa)) is interaction with CTC1. Residues 58–162 (VDVLGIVVYK…EIKATSFYKV (105 aa)) constitute a DNA-binding region (OB). Winged helix-turn-helix (wHTH) regions lie at residues 201 to 295 (AGGS…NVTE) and 296 to 368 (QDKD…YIVL).

It belongs to the CTC1 family. In terms of assembly, component of the CST complex.

The protein localises to the nucleus. It is found in the chromosome. It localises to the telomere. Component of the CST complex proposed to act as a specialized replication factor promoting DNA replication under conditions of replication stress or natural replication barriers such as the telomere duplex. The CST complex binds single-stranded DNA with high affinity in a sequence-independent manner, while isolated subunits bind DNA with low affinity by themselves. Initially the CST complex has been proposed to protect telomeres from DNA degradation. However, the CST complex has been shown to be involved in several aspects of telomere replication. This Danio rerio (Zebrafish) protein is CST complex subunit STN1.